The primary structure comprises 230 residues: uncharacterized protein (230 aa).

The next 6 membrane-spanning stretches (helical) occupy residues 4 to 24 (ACIA…MVKL), 30 to 50 (LPFL…LMMF), 67 to 87 (LLGP…HIIV), 91 to 111 (VPIL…GLIF), 148 to 168 (MTVV…PLFL), and 210 to 230 (MTLC…LFHI).

It belongs to the YohK (E.coli)/YwbG (IPA-22R) (B.subtilis) family.

Its subcellular location is the cell membrane. This is an uncharacterized protein from Bacillus subtilis (strain 168).